We begin with the raw amino-acid sequence, 441 residues long: C4-dicarboxylate transport protein (441 aa).

At 1–30 (MIIEHSAEVRGKTPLYRHLYVQVLAAIAAG) the chain is on the cytoplasmic side. The chain crosses the membrane as a helical span at residues 31–49 (ILLGHFYPDIGTELKPLGD). At 50–68 (AFIRLVKMIIAPVIFLTVA) the chain is on the periplasmic side. Residues 69–87 (TGIAGMTDLAKVGRVAGKA) traverse the membrane as a helical segment. The Cytoplasmic portion of the chain corresponds to 88 to 99 (MIYFLAFSTLAL). A helical membrane pass occupies residues 100–118 (VVGLVVANVVQPGAGMHID). At 119 to 149 (PASLDAKAVATYAEKAHEQSITGFLMNIIPT) the chain is on the periplasmic side. Residues 150–168 (TLVGAFAEGDILQVLFISV) form a helical membrane-spanning segment. Residues 169–171 (LFG) lie on the Cytoplasmic side of the membrane. The chain crosses the membrane as a helical span at residues 172–190 (ISLAIVGKKAEPVVDFLQA). At 191–209 (LTLPIFRLVAILMKAAPIG) the chain is on the periplasmic side. Residues 210–228 (AFGAMAFTIGKYGIASIAN) form a helical membrane-spanning segment. Topologically, residues 229–241 (LAMLIGTFYLTSF) are cytoplasmic. Residues 242-260 (LFVFIVLGAVARYNGFSIL) form a helical membrane-spanning segment. The Periplasmic portion of the chain corresponds to 261–281 (SLIRYIKEELLLVLGTSSSEA). The helical transmembrane segment at 282–300 (ALPGLMNKMEKAGCKRSVV) threads the bilayer. Residues 301-320 (GLVIPTGYSFNLDGTNIYMT) lie on the Cytoplasmic side of the membrane. A helical transmembrane segment spans residues 321–339 (LAALFIAQATDTPLSYGDQ). Residues 340–350 (ILLLLVAMLSS) lie on the Periplasmic side of the membrane. Residues 351-369 (KGAAGITGAGFITLAATLS) traverse the membrane as a helical segment. Residues 370–378 (VVPSVPVAG) lie on the Cytoplasmic side of the membrane. A helical membrane pass occupies residues 379–398 (MALILGIDRFMSECRALTNF). The Periplasmic portion of the chain corresponds to 399-405 (VGNAVAT). A helical transmembrane segment spans residues 406 to 424 (IVVAKWEGELDQAQLSAAL). Topologically, residues 425–441 (GGEASVEAIPAVVQPAE) are cytoplasmic.

It belongs to the dicarboxylate/amino acid:cation symporter (DAACS) (TC 2.A.23) family.

The protein resides in the cell inner membrane. In terms of biological role, responsible for the transport of dicarboxylates such as succinate, fumarate, and malate from the periplasm across the inner membrane. This transport system plays an important role in the energy supply of rhizobium-legume symbionts. This Rhizobium meliloti (strain 1021) (Ensifer meliloti) protein is C4-dicarboxylate transport protein (dctA).